The sequence spans 164 residues: Choriogonadotropin subunit beta (164 aa).

The signal sequence occupies residues 1 to 20; it reads MEMLQGLLLCLLLSTGGAWA. Intrachain disulfides connect Cys-29–Cys-77, Cys-43–Cys-92, Cys-46–Cys-130, Cys-54–Cys-108, Cys-58–Cys-110, and Cys-113–Cys-120. Asn-50 carries N-linked (GlcNAc...) asparagine glycosylation. Residues 135-164 form a disordered region; that stretch reads FQDSSSKDPPRNLTSPSQLLEPADPPLVPQ. Ser-140 carries an O-linked (GalNAc...) serine glycan. N-linked (GlcNAc...) asparagine glycosylation occurs at Asn-146. Ser-151 carries an O-linked (GalNAc...) serine glycan.

Belongs to the glycoprotein hormones subunit beta family. As to quaternary structure, heterodimer of a common alpha chain and a unique beta chain which confers biological specificity to thyrotropin, lutropin, follitropin and gonadotropin. As to expression, placenta.

Its subcellular location is the secreted. Its function is as follows. Stimulates the ovaries to synthesize the steroids that are essential for the maintenance of pregnancy. This Callithrix jacchus (White-tufted-ear marmoset) protein is Choriogonadotropin subunit beta (CGB).